Consider the following 188-residue polypeptide: Large ribosomal subunit protein eL18 (188 aa).

Residue Lys-119 forms a Glycyl lysine isopeptide (Lys-Gly) (interchain with G-Cter in SUMO2) linkage. A Phosphoserine modification is found at Ser-130. The segment at 151–188 is disordered; sequence HFGKAPGTPHSHTKPYVRSKGRKFERARGRRASRGYKN. At Thr-158 the chain carries Phosphothreonine. Composition is skewed to basic residues over residues 161-171 and 178-188; these read SHTKPYVRSKG and RGRRASRGYKN. A Glycyl lysine isopeptide (Lys-Gly) (interchain with G-Cter in SUMO2) cross-link involves residue Lys-164.

Belongs to the eukaryotic ribosomal protein eL18 family. In terms of assembly, component of the large ribosomal subunit.

The protein localises to the cytoplasm. The protein resides in the cytosol. It is found in the rough endoplasmic reticulum. In terms of biological role, component of the large ribosomal subunit. The ribosome is a large ribonucleoprotein complex responsible for the synthesis of proteins in the cell. The sequence is that of Large ribosomal subunit protein eL18 (RPL18) from Homo sapiens (Human).